The sequence spans 181 residues: I-Kappa-B like protein C2 (181 aa).

ANK repeat units follow at residues 54–86, 91–121, and 125–154; these read DGKX…DINS, DGNT…DMEI, and ARKT…RCDV.

This sequence belongs to the polydnaviridae I-Kappa-B-like protein family.

Suppresses the host immune response through NF-kappa-B inactivation. Possesses ankyrin repeat domains required for NF-kappa-B binding but lacks the regulatory regions required for dissociation from NF-kappa-B and degradation. Therefore, prevents host NF-kappa-B release and subsequent activation. This is I-Kappa-B like protein C2 (C2) from Microplitis demolitor (Parasitoid wasp).